We begin with the raw amino-acid sequence, 403 residues long: MKIAFLRPGKIGTPANHVYALLDYLREKGAEIREYDLKERDVNDVVKEIEEWKPLFLMDVNATGVIVAERDGKKHILADILGIVHVSVFFEDPLLFFPAFEGVEKPQNYIAFITELKHTDSLTALGIQNISYISPFVDLKQFPESEGEKDIEIAFVGPVVDPQIILNSVSQNYPQEIMPFFIETGEFMFRNPEVHILTAFNYVFGLFNPQMQEQFNKWREQNPSAFMRFLNDITAYTTMRRRMYLLHFLDGMDVKILGDYQGNLFENHEAIKVSSYEQLLKYYSRSNITVYVSPQTYPTGLSVIPLEILYMGSLPLIDFKGAIPGFLKPGEEIETFAPLDRADLEEKIVFYIEENREGINEIVQRGKKAVQERFTVKDRGEFVYNVLSDVKRQYEAAQKGQVN.

This is an uncharacterized protein from Aquifex aeolicus (strain VF5).